Consider the following 277-residue polypeptide: Large ribosomal subunit protein uL2 (277 aa).

The interval 223 to 277 is disordered; sequence VTMNPVDHPHGGGEGRTSGGRHPVTPWGKPTKGMKTRSNKATDKFIVTSRHKRKK.

This sequence belongs to the universal ribosomal protein uL2 family. In terms of assembly, part of the 50S ribosomal subunit. Forms a bridge to the 30S subunit in the 70S ribosome.

Its function is as follows. One of the primary rRNA binding proteins. Required for association of the 30S and 50S subunits to form the 70S ribosome, for tRNA binding and peptide bond formation. It has been suggested to have peptidyltransferase activity; this is somewhat controversial. Makes several contacts with the 16S rRNA in the 70S ribosome. In Azorhizobium caulinodans (strain ATCC 43989 / DSM 5975 / JCM 20966 / LMG 6465 / NBRC 14845 / NCIMB 13405 / ORS 571), this protein is Large ribosomal subunit protein uL2.